We begin with the raw amino-acid sequence, 793 residues long: Copalyl diphosphate synthase CPS1, chloroplastic (793 aa).

The transit peptide at M1–A59 directs the protein to the chloroplast. K238 is a binding site for substrate. Mg(2+) is bound by residues D370 and D372. The DXDD motif motif lies at D370 to D373. Substrate is bound at residue K457.

It belongs to the terpene synthase family. Requires Mg(2+) as cofactor.

It localises to the plastid. Its subcellular location is the chloroplast. It carries out the reaction (2E,6E,10E)-geranylgeranyl diphosphate = (+)-copalyl diphosphate. Its pathway is secondary metabolite biosynthesis; terpenoid biosynthesis. Its function is as follows. Involved in tanshinone biosynthesis in hairy roots. Catalyzes the conversion of geranylgeranyl diphosphate (GGPP) to copalyl diphosphate (CPP). This chain is Copalyl diphosphate synthase CPS1, chloroplastic, found in Salvia miltiorrhiza (Chinese sage).